Reading from the N-terminus, the 257-residue chain is Capsid protein (257 aa).

Belongs to the geminiviridae capsid protein family.

It is found in the virion. Encapsidates the viral DNA into characteristic twinned ('geminate') particles. Plays a role in protection of the genome from degradation, virus acquisition and transmission by insect vectors, infectivity, and systemic movement. In Capsicum annuum (Capsicum pepper), this protein is Capsid protein.